A 233-amino-acid polypeptide reads, in one-letter code: Sugar fermentation stimulation protein homolog (233 aa).

The protein belongs to the SfsA family.

This Rhodospirillum centenum (strain ATCC 51521 / SW) protein is Sugar fermentation stimulation protein homolog.